Reading from the N-terminus, the 570-residue chain is Urease subunit alpha (570 aa).

Residues 132 to 570 (GGIDTHVHFL…VPMARRYFLF (439 aa)) enclose the Urease domain. Ni(2+) contacts are provided by histidine 137, histidine 139, and lysine 220. An N6-carboxylysine modification is found at lysine 220. Residue histidine 222 participates in substrate binding. Residues histidine 249 and histidine 275 each contribute to the Ni(2+) site. The Proton donor role is filled by histidine 323. Aspartate 363 is a binding site for Ni(2+).

The protein belongs to the metallo-dependent hydrolases superfamily. Urease alpha subunit family. In terms of assembly, heterotrimer of UreA (gamma), UreB (beta) and UreC (alpha) subunits. Three heterotrimers associate to form the active enzyme. The cofactor is Ni cation. Post-translationally, carboxylation allows a single lysine to coordinate two nickel ions.

It is found in the cytoplasm. It catalyses the reaction urea + 2 H2O + H(+) = hydrogencarbonate + 2 NH4(+). It functions in the pathway nitrogen metabolism; urea degradation; CO(2) and NH(3) from urea (urease route): step 1/1. The sequence is that of Urease subunit alpha from Corynebacterium glutamicum (strain ATCC 13032 / DSM 20300 / JCM 1318 / BCRC 11384 / CCUG 27702 / LMG 3730 / NBRC 12168 / NCIMB 10025 / NRRL B-2784 / 534).